The primary structure comprises 128 residues: Translation initiation factor 5A (128 aa).

K35 is modified (hypusine).

It belongs to the eIF-5A family.

It localises to the cytoplasm. Its function is as follows. Functions by promoting the formation of the first peptide bond. This Methanosarcina barkeri (strain Fusaro / DSM 804) protein is Translation initiation factor 5A.